A 755-amino-acid polypeptide reads, in one-letter code: Leucine-rich repeat-containing protein 36 (755 aa).

2 LRR repeats span residues 51-72 and 73-94; these read SLRSLDLSRNLITSLKGIQYLC and SLQELNLYYNNIPSLVEVSRLQ. The 40-residue stretch at 107–146 folds into the LRRCT domain; it reads NPVVRKDTDYRLFAVYTLQTLEKLDDRAVRDSERRAAKLH. Disordered regions lie at residues 354 to 374 and 448 to 517; these read GKNYREHSIKPSQDKKATTSH and LPPG…PPIS. Basic and acidic residues predominate over residues 356-370; sequence NYREHSIKPSQDKKA. The span at 498 to 510 shows a compositional bias: low complexity; sequence LSSDLGSLHGLSG. Residues 601–671 are a coiled coil; the sequence is VESLKQKLVK…ELTQLKRLEE (71 aa). Positions 701–755 are disordered; it reads YSGKSLLPPEKSHPLGRSSPFGKSTLSSSSPMVHDTGQYLIQSVSEADPEPSLWS. Polar residues predominate over residues 721 to 731; it reads FGKSTLSSSSP.

This is Leucine-rich repeat-containing protein 36 (Lrrc36) from Mus musculus (Mouse).